A 515-amino-acid chain; its full sequence is 1-pyrroline-5-carboxylate dehydrogenase (515 aa).

Active-site residues include E286 and C320.

The protein belongs to the aldehyde dehydrogenase family. RocA subfamily.

It carries out the reaction L-glutamate 5-semialdehyde + NAD(+) + H2O = L-glutamate + NADH + 2 H(+). It functions in the pathway amino-acid degradation; L-proline degradation into L-glutamate; L-glutamate from L-proline: step 2/2. This Bacillus cytotoxicus (strain DSM 22905 / CIP 110041 / 391-98 / NVH 391-98) protein is 1-pyrroline-5-carboxylate dehydrogenase.